The primary structure comprises 185 residues: Dual-action ribosomal maturation protein DarP (185 aa).

Belongs to the DarP family.

Its subcellular location is the cytoplasm. In terms of biological role, member of a network of 50S ribosomal subunit biogenesis factors which assembles along the 30S-50S interface, preventing incorrect 23S rRNA structures from forming. Promotes peptidyl transferase center (PTC) maturation. The protein is Dual-action ribosomal maturation protein DarP of Vibrio vulnificus (strain YJ016).